The primary structure comprises 3075 residues: Lovastatin nonaketide synthase mokA (3075 aa).

The Ketosynthase family 3 (KS3) domain maps to 49–488; the sequence is NEPIVVVGSG…GTNAHAIIEE (440 aa). Residues Cys222, His361, and His408 each act as for beta-ketoacyl synthase activity in the active site. The tract at residues 603-945 is acyl and malonyl transferase; the sequence is VFTGQGAQWP…AYLWEQFGIP (343 aa). Ser697 (for malonyltransferase activity) is an active-site residue. The interval 997–1133 is N-terminal hotdog fold; it reads HLLLGKLSEY…GQLVVTLDEG (137 aa). A PKS/mFAS DH domain is found at 997–1311; it reads HLLLGKLSEY…FKPFSPPTAS (315 aa). Catalysis depends on His1029, which acts as the Proton acceptor; for dehydratase activity. Residues 1029 to 1041 form a dehydratase-like region; sequence HALQGQVVFPAAG. The interval 1156–1311 is C-terminal hotdog fold; the sequence is MNRVNINSFY…FKPFSPPTAS (156 aa). Asp1218 (proton donor; for dehydratase activity) is an active-site residue. Residues 1556–1594 form a methyltransferase region; sequence YDLIIASNVLHATPDLEKTMAHARSLLKPGGQMVILEIT. Residues 2176–2470 are beta-ketoacyl reductase; sequence ALPARIRPID…FKIPERRGKA (295 aa). The Carrier domain occupies 2492–2571; sequence DQVRQIVIDG…DLADDAAARL (80 aa). O-(pantetheine 4'-phosphoryl)serine is present on Ser2531. The tract at residues 2582–2624 is disordered; the sequence is SEGGAETSDNDTSGPEGTDLSASTTITEPSSADEEDEKQEDDN. Residues 2591-2611 are compositionally biased toward polar residues; it reads NDTSGPEGTDLSASTTITEPS. A compositionally biased stretch (acidic residues) spans 2612 to 2624; sequence SADEEDEKQEDDN. Residues 2633 to 2989 are peptide synthetase elongation; it reads PLSLGQEYAW…AETAEPAPLF (357 aa).

Requires pantetheine 4'-phosphate as cofactor.

The catalysed reaction is holo-[lovastatin nonaketide synthase] + 9 malonyl-CoA + S-adenosyl-L-methionine + 11 NADPH + 19 H(+) = dihydromonacolin L-[lovastatin nonaketide synthase] + S-adenosyl-L-homocysteine + 9 CO2 + 11 NADP(+) + 9 CoA + 6 H2O. It participates in polyketide biosynthesis; lovastatin biosynthesis. Functionally, nonaketide synthase; part of the gene cluster that mediates the biosynthesis of monakolin K, also known as lovastatin, and which acts as a potent competitive inhibitor of HMG-CoA reductase. Monakolin K biosynthesis is performed in two stages. The first stage is catalyzed by the nonaketide synthase mokA, which belongs to type I polyketide synthases and catalyzes the iterative nine-step formation of the polyketide. This PKS stage is completed by the action of dehydrogenase mokE, which catalyzes the NADPH-dependent reduction of the unsaturated tetra-, penta- and heptaketide intermediates that arise during the mokA-mediated biosynthesis of the nonaketide chain and leads to dihydromonacolin L. Covalently bound dihydromonacolin L is released from mokA by the mokD esterase. Conversion of dihydromonacolin L into monacolin L and then monacolin J is subsequently performed with the participation of molecular oxygen and P450 monoogygenase mokC. Finally, mokF performs the conversion of monacoline J to monacoline K through the addition of the side-chain diketide moiety (2R)-2-methylbutanoate produced by the diketide synthase mokB. This chain is Lovastatin nonaketide synthase mokA, found in Monascus pilosus (Red mold).